Here is a 448-residue protein sequence, read N- to C-terminus: uncharacterized protein (448 aa).

The Extracellular portion of the chain corresponds to methionine 1 to lysine 50. A helical transmembrane segment spans residues isoleucine 51–tryptophan 71. The Cytoplasmic portion of the chain corresponds to tyrosine 72 to glycine 93. Residues leucine 94–isoleucine 114 form a helical membrane-spanning segment. Residues serine 115 to alanine 146 lie on the Extracellular side of the membrane. Residues isoleucine 147–valine 167 traverse the membrane as a helical segment. The Cytoplasmic segment spans residues aspartate 168 to lysine 184. Residues leucine 185–serine 205 form a helical membrane-spanning segment. At aspartate 206–lysine 260 the chain is on the extracellular side. The chain crosses the membrane as a helical span at residues leucine 261–valine 281. The Cytoplasmic segment spans residues tyrosine 282 to glutamine 287. Residues phenylalanine 288–serine 308 traverse the membrane as a helical segment. At serine 309 to serine 333 the chain is on the extracellular side. A helical transmembrane segment spans residues glycine 334 to leucine 354. The Cytoplasmic portion of the chain corresponds to asparagine 355 to glycine 386. Glycine 386 to threonine 393 serves as a coordination point for ATP. A helical membrane pass occupies residues valine 387 to alanine 407. The Extracellular portion of the chain corresponds to asparagine 408–tyrosine 416. The helical transmembrane segment at isoleucine 417–valine 437 threads the bilayer. Topologically, residues aspartate 438–histidine 448 are cytoplasmic.

Its subcellular location is the membrane. This is an uncharacterized protein from Saccharomyces cerevisiae (strain ATCC 204508 / S288c) (Baker's yeast).